Reading from the N-terminus, the 258-residue chain is Small ribosomal subunit protein mS40 (258 aa).

A mitochondrion-targeting transit peptide spans 1–35; the sequence is MAASILNVLLRRLPGVSPFRGAYGVQVLLQTLCTK. Residue serine 49 is modified to Phosphoserine. Residues 223-258 are disordered; it reads RLREESGPPPELMPEVPLTAPAEASSTEPGAPQSAL.

The protein belongs to the bacterial ribosomal protein bS18 family. Mitochondrion-specific ribosomal protein mS40 subfamily. As to quaternary structure, component of the mitochondrial ribosome small subunit (28S) which comprises a 12S rRNA and about 30 distinct proteins.

It is found in the mitochondrion. The sequence is that of Small ribosomal subunit protein mS40 (MRPS18B) from Sus scrofa (Pig).